The sequence spans 231 residues: Phosphoglycolate phosphatase (231 aa).

Asp-9 serves as the catalytic Nucleophile. Mg(2+) is bound by residues Asp-9 and Asp-11. The active-site Proton donor is Asp-11. Substrate is bound at residue Lys-154. Mg(2+)-binding residues include Asp-177 and Asp-181.

This sequence belongs to the archaeal SPP-like hydrolase family. As to quaternary structure, homodimer. Mg(2+) serves as cofactor.

The enzyme catalyses 2-phosphoglycolate + H2O = glycolate + phosphate. Functionally, catalyzes the dephosphorylation of 2-phosphoglycolate. Has phosphatase activity towards p-nitrophenylphosphate (in vitro). In Pyrococcus horikoshii (strain ATCC 700860 / DSM 12428 / JCM 9974 / NBRC 100139 / OT-3), this protein is Phosphoglycolate phosphatase.